The chain runs to 892 residues: Protein BNI4 (892 aa).

A phosphoserine mark is found at S43 and S133. 2 disordered regions span residues 185–287 (DFLS…EDTS) and 305–387 (KPVI…QDTE). Residues 208 to 223 (TILERDNNLPVKREEN) are compositionally biased toward basic and acidic residues. Composition is skewed to polar residues over residues 224–236 (TIIN…TTHS) and 270–280 (DSSAQRTTSAG). Phosphoserine is present on S281. The segment covering 309–335 (GNNSVTNEKNKMSSSSTFSMNIQTSLK) has biased composition (polar residues). Residues 346-356 (SSSSIFNSFLK) are compositionally biased toward low complexity. Basic and acidic residues predominate over residues 357–371 (GKIETSDSPRKEPMR). Residues S364 and S394 each carry the phosphoserine modification. T410 carries the post-translational modification Phosphothreonine. Phosphoserine is present on residues S476, S500, and S503. 3 disordered regions span residues 506 to 526 (RTRS…RSLT), 618 to 644 (SDEE…SERQ), and 685 to 734 (YATE…GDER). S618 bears the Phosphoserine mark. Over residues 624–643 (EVERDVPKPREEPLKKDSER) the composition is skewed to basic and acidic residues. T703 carries the phosphothreonine modification. Residues 707–719 (RNNKEDSYKERET) show a composition bias toward basic and acidic residues. S746 and S825 each carry phosphoserine.

In terms of assembly, may interact with CHS3 and seems to be an adapter (along with SKT5) to link CHS3 to septins.

The sequence is that of Protein BNI4 (BNI4) from Saccharomyces cerevisiae (strain ATCC 204508 / S288c) (Baker's yeast).